We begin with the raw amino-acid sequence, 194 residues long: uncharacterized protein (194 aa).

Disordered regions lie at residues 52 to 71 (KGRT…EKYK) and 86 to 194 (AEAL…DGGS). 3 stretches are compositionally biased toward polar residues: residues 53–63 (GRTTQSAINSE), 98–111 (ALTS…SSTN), and 119–132 (IAHS…TSPA). The span at 133–169 (NRHRRKEKERTRSNHRHGSHRRHEPYRTHLSRHHRHS) shows a compositional bias: basic residues. The segment covering 175–194 (SKRDDRYERRREHSPNDGGS) has biased composition (basic and acidic residues).

This is an uncharacterized protein from Schizosaccharomyces pombe (strain 972 / ATCC 24843) (Fission yeast).